A 251-amino-acid chain; its full sequence is Pyrroline-5-carboxylate reductase (251 aa).

Belongs to the pyrroline-5-carboxylate reductase family.

It is found in the cytoplasm. The enzyme catalyses L-proline + NADP(+) = (S)-1-pyrroline-5-carboxylate + NADPH + 2 H(+). It catalyses the reaction L-proline + NAD(+) = (S)-1-pyrroline-5-carboxylate + NADH + 2 H(+). Its pathway is amino-acid biosynthesis; L-proline biosynthesis; L-proline from L-glutamate 5-semialdehyde: step 1/1. In terms of biological role, catalyzes the reduction of 1-pyrroline-5-carboxylate (PCA) to L-proline. This Methanobrevibacter smithii protein is Pyrroline-5-carboxylate reductase (proC).